A 424-amino-acid chain; its full sequence is UDP-N-acetylglucosamine 1-carboxyvinyltransferase (424 aa).

A phosphoenolpyruvate-binding site is contributed by 22–23 (KN). Residue R98 coordinates UDP-N-acetyl-alpha-D-glucosamine. C122 serves as the catalytic Proton donor. C122 carries the 2-(S-cysteinyl)pyruvic acid O-phosphothioketal modification. Residues 127 to 131 (RPVDQ), D312, and I334 contribute to the UDP-N-acetyl-alpha-D-glucosamine site.

The protein belongs to the EPSP synthase family. MurA subfamily.

The protein resides in the cytoplasm. The catalysed reaction is phosphoenolpyruvate + UDP-N-acetyl-alpha-D-glucosamine = UDP-N-acetyl-3-O-(1-carboxyvinyl)-alpha-D-glucosamine + phosphate. The protein operates within cell wall biogenesis; peptidoglycan biosynthesis. Cell wall formation. Adds enolpyruvyl to UDP-N-acetylglucosamine. This chain is UDP-N-acetylglucosamine 1-carboxyvinyltransferase, found in Xanthomonas campestris pv. campestris (strain 8004).